A 346-amino-acid polypeptide reads, in one-letter code: Haptoglobin (346 aa).

The first 18 residues, 1 to 18 (MRALGAVVTLLLWGQLFA), serve as a signal peptide directing secretion. Residues 31-87 (DSCPKPPEIENGYVEHLVRYRCQHYRLRTEGDGVYTLNSEKQWVNTAAGERLPECEA) form the Sushi domain. 4 disulfides stabilise this stretch: Cys52-Cys85, Cys89-Cys206, Cys249-Cys280, and Cys291-Cys321. Residues 102-344 (IIGGSLDAKG…FLDWIQETMA (243 aa)) enclose the Peptidase S1 domain. N-linked (GlcNAc...) asparagine glycans are attached at residues Asn147 and Asn181. Positions 258-263 (VPEKEG) are interaction with CD163.

This sequence belongs to the peptidase S1 family. In terms of assembly, tetramer of two alpha and two beta chains; disulfide-linked. The hemoglobin/haptoglobin complex is composed of a haptoglobin dimer bound to two hemoglobin alpha-beta dimers. Interacts with CD163. Interacts with ERGIC3. Expressed by the liver and secreted in plasma.

The protein resides in the secreted. Its function is as follows. As a result of hemolysis, hemoglobin is found to accumulate in the kidney and is secreted in the urine. Haptoglobin captures, and combines with free plasma hemoglobin to allow hepatic recycling of heme iron and to prevent kidney damage. Haptoglobin also acts as an antioxidant, has antibacterial activity and plays a role in modulating many aspects of the acute phase response. Hemoglobin/haptoglobin complexes are rapidly cleared by the macrophage CD163 scavenger receptor expressed on the surface of liver Kupfer cells through an endocytic lysosomal degradation pathway. This is Haptoglobin (HP) from Mesocricetus auratus (Golden hamster).